The sequence spans 376 residues: Glutamate 5-kinase (376 aa).

ATP is bound at residue Lys15. Ser56, Asp143, and Asn155 together coordinate substrate. 175 to 176 (SD) contributes to the ATP binding site. In terms of domain architecture, PUA spans 281 to 358 (KGTLTIDAGA…PDVMMILGIT (78 aa)).

This sequence belongs to the glutamate 5-kinase family.

It is found in the cytoplasm. The enzyme catalyses L-glutamate + ATP = L-glutamyl 5-phosphate + ADP. It participates in amino-acid biosynthesis; L-proline biosynthesis; L-glutamate 5-semialdehyde from L-glutamate: step 1/2. Its function is as follows. Catalyzes the transfer of a phosphate group to glutamate to form L-glutamate 5-phosphate. In Rhodopseudomonas palustris (strain ATCC BAA-98 / CGA009), this protein is Glutamate 5-kinase.